Consider the following 51-residue polypeptide: Insulin (51 aa).

Intrachain disulfides connect Cys8/Cys37, Cys20/Cys50, and Cys36/Cys41.

It belongs to the insulin family. As to quaternary structure, heterodimer of a B chain and an A chain linked by two disulfide bonds.

Its subcellular location is the secreted. Insulin decreases blood glucose concentration. It increases cell permeability to monosaccharides, amino acids and fatty acids. It accelerates glycolysis, the pentose phosphate cycle, and glycogen synthesis in liver. The polypeptide is Insulin (Pagrus major (Red sea bream)).